We begin with the raw amino-acid sequence, 195 residues long: MGQSHLDIGVGTGYYPAKSLKAGAKCTEITLLDLSPNSLQATEQRILETVGREAVRVNTVVASALEPLPFDKAKKFNSISVFFLLHCMPGTPEEKCKLFDVVRPHLAEDGVLVGTTVLGQGVPINWLGQKMMNSYNNNTKSFHNSEDNKAQFDEGLRRNFEEVDSWIMGQVMLFKARKPRQQDAITNVVPKDNLD.

This sequence belongs to the methyltransferase superfamily.

The protein operates within secondary metabolite biosynthesis. Its function is as follows. O-methyltransferase; part of the gene cluster that mediates the biosynthesis of pyrophen and campyrone B, which represent a class of fungal amino acid-derived alpha-pyrone natural products. The first step of pyrophen biosynthesis is catalyzed by the PKS-NRPS hybrid synthetase ATPKS that uptakes and condensates L-phenylalanine and malonyl-CoA in order to produce desmethyldesacetylpyrophen. Although the A domain does not discriminate between 2 enantiomeric phenylalanines, the downstream KS domain must play a gate keeping role to stereoselectively accept the L-phenylalanyl-S-phosphopantetheine (Ppant)-T domain intermediate for chain elongation. The resulting amino acid derived diketide is off-loaded through lactonization to yield the alpha-pyrone intermediate desmethyldesacetylpyrophen. The cluster-specific O-methyltransferase (OMT) then methylates desmethyldesacetylpyrophen to desacetylpyrophen, which is further acetylated to pyrophen by an endogenous yet unidentified N-acetyltransferase. ATPKS has relaxed substrate specificity to activate and extend branched-chain amino acid L-leucine to produce small amounts of campyrone B. This Aspergillus niger (strain ATCC 1015 / CBS 113.46 / FGSC A1144 / LSHB Ac4 / NCTC 3858a / NRRL 328 / USDA 3528.7) protein is O-methyltransferase.